We begin with the raw amino-acid sequence, 525 residues long: uncharacterized protein (525 aa).

Phosphoserine is present on serine 55. The next 13 helical transmembrane spans lie at 81–101 (AYIV…PNFY), 120–140 (LLGQ…LGPL), 147–167 (KLVY…CALA), 173–193 (LVIS…NVAG), 208–228 (MYMF…GTGV), 238–258 (WLYW…VFTP), 295–315 (FVFF…SLGI), 318–338 (GFVN…YFSI), 350–370 (YMAA…QCWL), 388–408 (FIMT…FAFC), 413–433 (IHYI…YHIW), 454–474 (AFEL…ALMF), and 484–504 (AVVG…YFYG).

This sequence belongs to the major facilitator superfamily. CAR1 family.

The protein localises to the membrane. This is an uncharacterized protein from Schizosaccharomyces pombe (strain 972 / ATCC 24843) (Fission yeast).